Here is a 152-residue protein sequence, read N- to C-terminus: Orientotoxin-1 (152 aa).

Expressed by the venom gland.

The protein localises to the secreted. It carries out the reaction a 1-acyl-sn-glycero-3-phosphocholine + H2O = sn-glycerol 3-phosphocholine + a fatty acid + H(+). Its function is as follows. Neurotoxin of presynaptic effect which degrades lysophospholipids. In Vespa orientalis (Oriental hornet), this protein is Orientotoxin-1.